We begin with the raw amino-acid sequence, 189 residues long: Movement protein (189 aa).

The protein belongs to the tombusvirus/aureusvirus movement protein p22 family.

Its subcellular location is the host membrane. Transports viral genome to neighboring plant cells directly through plasmosdesmata, without any budding. The movement protein allows efficient cell to cell propagation, by bypassing the host cell wall barrier. The protein is Movement protein of Artichoke mottled crinkle virus (AMCV).